The following is a 481-amino-acid chain: Phloretin 4'-O-glucosyltransferase (481 aa).

His-16 serves as the catalytic Proton acceptor. His-16 lines the an anthocyanidin pocket. Residues Gln-354, His-369, Trp-372, Asn-373, Ser-374, Glu-377, Asp-393, and Gln-394 each coordinate UDP-alpha-D-glucose.

This sequence belongs to the UDP-glycosyltransferase family. As to expression, highly expressed in young leaves, at intermediate level in mature leaves and at low levels in flowers and fruits.

The enzyme catalyses phloretin + UDP-alpha-D-glucose = trilobatin + UDP + H(+). The catalysed reaction is (2S)-naringenin + UDP-alpha-D-glucose = (2S)-naringenin 7-O-beta-D-glucoside + UDP + H(+). In terms of biological role, glycosyltransferase that possesses phloretin 4'-O-glycosyltransferase activity. Converts phloretin to trilobatin (phloretin 4'-O-glucoside), a potential antioxidant. Can convert with low efficiency phlorizin and trilobatin to their corresponding di-O-glucosides. Can convert with low efficiency naringenin to naringenin-7-O-glucoside. Can convert with low efficiency quercetin to quercetin-7-O-glucoside. This is Phloretin 4'-O-glucosyltransferase from Malus domestica (Apple).